Here is a 1649-residue protein sequence, read N- to C-terminus: Formin-like protein 20 (1649 aa).

Residues 1-194 (MALFRRFFYK…QYISRRNLGS (194 aa)) form the Phosphatase tensin-type domain. Cys127 acts as the Phosphocysteine intermediate in catalysis. In terms of domain architecture, C2 tensin-type spans 200 to 339 (DTPLLLDCLI…FKAEVLFSGA (140 aa)). Disordered stretches follow at residues 416–774 (DCAS…PWKS) and 787–1245 (STSQ…QKKS). Residues 421 to 483 (DSNHKHDMHA…RRTVEAKEND (63 aa)) show a composition bias toward basic and acidic residues. 2 stretches are compositionally biased toward polar residues: residues 500 to 513 (LESM…SLNK) and 585 to 597 (RINS…TTSL). Basic and acidic residues predominate over residues 598 to 616 (KDGKRATSPDGVIPKDAKT). Residues 648–662 (SLPPASPHQAPPPLP) show a composition bias toward pro residues. Residues 665–678 (TSEAKTVLHSSQAV) show a composition bias toward polar residues. 5 stretches are compositionally biased toward pro residues: residues 680–691 (SPPPPPPPPPLP), 701–711 (LPPPPPPPPPF), 722–732 (LPPPPPPPPPF), 743–752 (LPPPPPPPLP), and 795–804 (SPTPPPPPPA). Polar residues predominate over residues 809–820 (GQKSSDLQTSQL). Composition is skewed to pro residues over residues 821–832 (PSPPPPPPPPPF), 843–854 (LPPPPPPPPPPF), and 865–874 (LPPPPPPPPW). Residues 878–890 (YASTFETHEACST) show a composition bias toward polar residues. Pro residues-rich tracts occupy residues 893–904 (SPPPPPPPPPFS), 944–960 (PSPP…PPPF), and 968–1213 (SPPP…PPPM). The 399-residue stretch at 1237-1635 (FGSAAQKKSS…KALKEAEMEK (399 aa)) folds into the FH2 domain.

It belongs to the formin-like family. Class-II subfamily.

In Arabidopsis thaliana (Mouse-ear cress), this protein is Formin-like protein 20 (FH20).